The sequence spans 175 residues: Ribosome-binding factor A (175 aa).

A disordered region spans residues 125–175 (TAKHAGEADPYKSDAPEDVDIDEDDFDEEDIDLAGDDDIDEDANKDADSSK). Over residues 128-139 (HAGEADPYKSDA) the composition is skewed to basic and acidic residues. A compositionally biased stretch (acidic residues) spans 140 to 165 (PEDVDIDEDDFDEEDIDLAGDDDIDE). The segment covering 166-175 (DANKDADSSK) has biased composition (basic and acidic residues).

The protein belongs to the RbfA family. Monomer. Binds 30S ribosomal subunits, but not 50S ribosomal subunits or 70S ribosomes.

Its subcellular location is the cytoplasm. One of several proteins that assist in the late maturation steps of the functional core of the 30S ribosomal subunit. Associates with free 30S ribosomal subunits (but not with 30S subunits that are part of 70S ribosomes or polysomes). Required for efficient processing of 16S rRNA. May interact with the 5'-terminal helix region of 16S rRNA. The chain is Ribosome-binding factor A from Pseudarthrobacter chlorophenolicus (strain ATCC 700700 / DSM 12829 / CIP 107037 / JCM 12360 / KCTC 9906 / NCIMB 13794 / A6) (Arthrobacter chlorophenolicus).